A 211-amino-acid polypeptide reads, in one-letter code: Mitotic spindle assembly checkpoint protein MAD2B (211 aa).

The 191-residue stretch at Q13–V203 folds into the HORMA domain. The mediates interaction with REV1 and REV3L and homodimerization stretch occupies residues E21 to A155.

As to quaternary structure, homooligomer. Heterodimer with REV3L. This dimer forms the minimal DNA polymerase zeta complex (Pol-zeta2), with REV3L bearing DNA polymerase catalytic activity, although its activity is very low in this context. Component of the tetrameric Pol-zeta complex (Pol-zeta4), which consists of REV3L, MAD2L2, POLD2 and POLD3; Pol-zeta4 is the fully active form of DNA polymerase zeta. Component of the shieldin complex, consisting of SHLD1, SHLD2, SHLD3 and MAD2L2/REV7. Within the complex, SHLD2 forms a scaffold which interacts with a SHLD3-MAD2L2 subcomplex via its N-terminus, and with SHLD1 via its C-terminus. Interacts with REV1. Interacts with ADAM9. Interacts with CHAMP1. Interacts with FZR1 (in complex with the anaphase promoting complex APC). May interact with CDC20. Interacts with RAN. Interacts with ELK1; the interaction is direct and recruits MAD2L2 to ELK1-specific promoters. May interact with the JNK kinases MAPK8 and/or MAPK9 to stimulate ELK1 phosphorylation and transcriptional activity upon DNA damage. Interacts with TCF7L2; prevents its binding to promoters and negatively modulates its transcriptional activity. Interacts with YY1AP1. Interacts with PRCC; the interaction is direct. Interacts with POGZ. Interacts with ASTE1.

It localises to the nucleus. It is found in the cytoplasm. The protein resides in the cytoskeleton. Its subcellular location is the spindle. Functionally, adapter protein able to interact with different proteins and involved in different biological processes. Mediates the interaction between the error-prone DNA polymerase zeta catalytic subunit REV3L and the inserter polymerase REV1, thereby mediating the second polymerase switching in translesion DNA synthesis. Translesion DNA synthesis releases the replication blockade of replicative polymerases, stalled in presence of DNA lesions. Component of the shieldin complex, which plays an important role in repair of DNA double-stranded breaks (DSBs). During G1 and S phase of the cell cycle, the complex functions downstream of TP53BP1 to promote non-homologous end joining (NHEJ) and suppress DNA end resection. Mediates various NHEJ-dependent processes including immunoglobulin class-switch recombination, and fusion of unprotected telomeres. May also regulate another aspect of cellular response to DNA damage through regulation of the JNK-mediated phosphorylation and activation of the transcriptional activator ELK1. Inhibits the FZR1- and probably CDC20-mediated activation of the anaphase promoting complex APC thereby regulating progression through the cell cycle. Regulates TCF7L2-mediated gene transcription and may play a role in epithelial-mesenchymal transdifferentiation. In Bos taurus (Bovine), this protein is Mitotic spindle assembly checkpoint protein MAD2B (MAD2L2).